Consider the following 209-residue polypeptide: Pyroglutamyl-peptidase 1 (209 aa).

Catalysis depends on residues E85, C149, and H168.

The protein belongs to the peptidase C15 family. As to quaternary structure, monomer.

Its subcellular location is the cytoplasm. The enzyme catalyses Release of an N-terminal pyroglutamyl group from a polypeptide, the second amino acid generally not being Pro.. Removes 5-oxoproline from various penultimate amino acid residues except L-proline. The chain is Pyroglutamyl-peptidase 1 (Pgpep1) from Mus musculus (Mouse).